Here is a 220-residue protein sequence, read N- to C-terminus: uncharacterized protein (220 aa).

This is an uncharacterized protein from Schizosaccharomyces pombe (strain 972 / ATCC 24843) (Fission yeast).